The sequence spans 488 residues: Probable Xaa-Pro aminopeptidase ATEG_00858 (488 aa).

Asp273, Asp284, Glu417, and Glu456 together coordinate Mn(2+).

The protein belongs to the peptidase M24B family. Requires Mn(2+) as cofactor.

The enzyme catalyses Release of any N-terminal amino acid, including proline, that is linked to proline, even from a dipeptide or tripeptide.. In terms of biological role, catalyzes the removal of a penultimate prolyl residue from the N-termini of peptides. The sequence is that of Probable Xaa-Pro aminopeptidase ATEG_00858 from Aspergillus terreus (strain NIH 2624 / FGSC A1156).